Reading from the N-terminus, the 311-residue chain is Malate dehydrogenase (311 aa).

NAD(+) contacts are provided by residues 7 to 12 (GAGNVG) and aspartate 32. Residues arginine 82 and arginine 88 each coordinate substrate. Residues asparagine 95 and 118 to 120 (VSN) contribute to the NAD(+) site. Substrate contacts are provided by asparagine 120 and arginine 151. Catalysis depends on histidine 175, which acts as the Proton acceptor.

The protein belongs to the LDH/MDH superfamily. MDH type 3 family.

It carries out the reaction (S)-malate + NAD(+) = oxaloacetate + NADH + H(+). Its function is as follows. Catalyzes the reversible oxidation of malate to oxaloacetate. The protein is Malate dehydrogenase of Flavobacterium johnsoniae (strain ATCC 17061 / DSM 2064 / JCM 8514 / BCRC 14874 / CCUG 350202 / NBRC 14942 / NCIMB 11054 / UW101) (Cytophaga johnsonae).